The following is a 488-amino-acid chain: Ribulose bisphosphate carboxylase large chain (488 aa).

2 residues coordinate substrate: Asn-127 and Thr-177. The active-site Proton acceptor is the Lys-179. Lys-181 is a binding site for substrate. Mg(2+)-binding residues include Lys-205, Asp-207, and Glu-208. Lys-205 is modified (N6-carboxylysine). The active-site Proton acceptor is the His-297. Residues Arg-298, His-330, and Ser-382 each contribute to the substrate site.

Belongs to the RuBisCO large chain family. Type I subfamily. As to quaternary structure, heterohexadecamer of 8 large chains and 8 small chains. Mg(2+) serves as cofactor.

The protein localises to the plastid. It localises to the chloroplast. The catalysed reaction is 2 (2R)-3-phosphoglycerate + 2 H(+) = D-ribulose 1,5-bisphosphate + CO2 + H2O. It carries out the reaction D-ribulose 1,5-bisphosphate + O2 = 2-phosphoglycolate + (2R)-3-phosphoglycerate + 2 H(+). RuBisCO catalyzes two reactions: the carboxylation of D-ribulose 1,5-bisphosphate, the primary event in carbon dioxide fixation, as well as the oxidative fragmentation of the pentose substrate in the photorespiration process. Both reactions occur simultaneously and in competition at the same active site. The protein is Ribulose bisphosphate carboxylase large chain of Cyanidioschyzon merolae (strain NIES-3377 / 10D) (Unicellular red alga).